The primary structure comprises 510 residues: Major capsid protein L1 (510 aa).

Positions 482 to 510 (GIKRSAPKAVTFESSSRSKKAPKRRRKNV) are disordered. Residues 498 to 510 (RSKKAPKRRRKNV) are compositionally biased toward basic residues.

Belongs to the papillomaviridae L1 protein family. Self-assembles into homopentamers. The capsid has an icosahedral symmetry and consists of 72 capsomers, with each capsomer being a pentamer of L1. Interacts with the minor capsid protein L2; this interaction is necessary for viral genome encapsidation. Interacts with protein E2; this interaction enhances E2-dependent replication and transcription activation.

It localises to the virion. The protein resides in the host nucleus. In terms of biological role, forms an icosahedral capsid with a T=7 symmetry and a 50 nm diameter. The capsid is composed of 72 pentamers linked to each other by disulfide bonds and associated with L2 proteins. Binds to heparan sulfate proteoglycans on cell surface of basal layer keratinocytes to provide initial virion attachment. This binding mediates a conformational change in the virus capsid that facilitates efficient infection. The virion enters the host cell via endocytosis. During virus trafficking, L1 protein dissociates from the viral DNA and the genomic DNA is released to the host nucleus. The virion assembly takes place within the cell nucleus. Encapsulates the genomic DNA together with protein L2. The sequence is that of Major capsid protein L1 from Bos taurus (Bovine).